The following is a 147-amino-acid chain: Myoglobin (147 aa).

The Globin domain occupies 2–141 (ADFDAVLKCW…VIADLEANYK (140 aa)). His-60 contacts nitrite. Residue His-60 participates in O2 binding. A heme b-binding site is contributed by His-89.

Belongs to the globin family. Monomeric.

The protein localises to the cytoplasm. The protein resides in the sarcoplasm. The enzyme catalyses Fe(III)-heme b-[protein] + nitric oxide + H2O = Fe(II)-heme b-[protein] + nitrite + 2 H(+). The catalysed reaction is H2O2 + AH2 = A + 2 H2O. Functionally, monomeric heme protein which primary function is to store oxygen and facilitate its diffusion within muscle tissues. Reversibly binds oxygen through a pentacoordinated heme iron and enables its timely and efficient release as needed during periods of heightened demand. Depending on the oxidative conditions of tissues and cells, and in addition to its ability to bind oxygen, it also has a nitrite reductase activity whereby it regulates the production of bioactive nitric oxide. Under stress conditions, like hypoxia and anoxia, it also protects cells against reactive oxygen species thanks to its pseudoperoxidase activity. In Auxis rochei (Bullet tuna), this protein is Myoglobin (mb).